Consider the following 238-residue polypeptide: Ubiquinone biosynthesis O-methyltransferase (238 aa).

Positions 39, 58, 79, and 123 each coordinate S-adenosyl-L-methionine.

The protein belongs to the methyltransferase superfamily. UbiG/COQ3 family.

It carries out the reaction a 3-demethylubiquinol + S-adenosyl-L-methionine = a ubiquinol + S-adenosyl-L-homocysteine + H(+). The enzyme catalyses a 3-(all-trans-polyprenyl)benzene-1,2-diol + S-adenosyl-L-methionine = a 2-methoxy-6-(all-trans-polyprenyl)phenol + S-adenosyl-L-homocysteine + H(+). Its pathway is cofactor biosynthesis; ubiquinone biosynthesis. In terms of biological role, O-methyltransferase that catalyzes the 2 O-methylation steps in the ubiquinone biosynthetic pathway. The protein is Ubiquinone biosynthesis O-methyltransferase of Hahella chejuensis (strain KCTC 2396).